A 194-amino-acid chain; its full sequence is Protein GrpE (194 aa).

Composition is skewed to basic and acidic residues over residues 1–19 (MSKE…ENTS) and 26–44 (KKEA…NQKL). A disordered region spans residues 1–44 (MSKEEFPSEKNLDKEENTSKPKKAVKKEAAKGEETKKNNENQKL).

Belongs to the GrpE family. In terms of assembly, homodimer.

It localises to the cytoplasm. Functionally, participates actively in the response to hyperosmotic and heat shock by preventing the aggregation of stress-denatured proteins, in association with DnaK and GrpE. It is the nucleotide exchange factor for DnaK and may function as a thermosensor. Unfolded proteins bind initially to DnaJ; upon interaction with the DnaJ-bound protein, DnaK hydrolyzes its bound ATP, resulting in the formation of a stable complex. GrpE releases ADP from DnaK; ATP binding to DnaK triggers the release of the substrate protein, thus completing the reaction cycle. Several rounds of ATP-dependent interactions between DnaJ, DnaK and GrpE are required for fully efficient folding. The chain is Protein GrpE from Lactobacillus acidophilus (strain ATCC 700396 / NCK56 / N2 / NCFM).